Reading from the N-terminus, the 1083-residue chain is DNA primase (1083 aa).

Residues 1022-1061 form a CHC2-type zinc finger; the sequence is CLRYPHRGGRTAPRTFVSLRVDHHNRLCISLAQQCFATKC.

Belongs to the herpesviridae DNA primase family. In terms of assembly, associates with the helicase and the primase-associated factor to form the helicase-primase factor.

It is found in the host nucleus. Functionally, essential component of the helicase/primase complex. Unwinds the DNA at the replication forks and generates single-stranded DNA for both leading and lagging strand synthesis. The primase initiates primer synthesis and thereby produces large amount of short RNA primers on the lagging strand that the polymerase elongates using dNTPs. In Homo sapiens (Human), this protein is DNA primase.